The primary structure comprises 669 residues: Cysteine-rich receptor-like protein kinase 34 (669 aa).

Residues 1–23 (MKLKISFLPTFLIFLISLDSVTA) form the signal peptide. Gnk2-homologous domains lie at 24-123 (QEIC…NVSF) and 133-246 (ETLY…LYPY). The Extracellular portion of the chain corresponds to 24–285 (QEICFSGFFK…SDRANTTIKG (262 aa)). Residues Asn35, Asn52, Asn103, Asn120, Asn147, Asn172, Asn252, and Asn280 are each glycosylated (N-linked (GlcNAc...) asparagine). The chain crosses the membrane as a helical span at residues 286-306 (IIVAIVVPIIVILVSLVVLLV). The Cytoplasmic portion of the chain corresponds to 307–669 (VCRRKKSYKT…DASITEFYPR (363 aa)). The region spanning 345–624 (FSDSNMIGRG…MMLTSSTTTL (280 aa)) is the Protein kinase domain. ATP is bound by residues 351 to 359 (IGRGGFGEV) and Lys373. Tyr418 carries the phosphotyrosine modification. Asp470 serves as the catalytic Proton acceptor. The residue at position 474 (Ser474) is a Phosphoserine. Thr510 bears the Phosphothreonine mark. Residue Tyr518 is modified to Phosphotyrosine.

Belongs to the protein kinase superfamily. Ser/Thr protein kinase family. CRK subfamily.

The protein localises to the membrane. The enzyme catalyses L-seryl-[protein] + ATP = O-phospho-L-seryl-[protein] + ADP + H(+). It catalyses the reaction L-threonyl-[protein] + ATP = O-phospho-L-threonyl-[protein] + ADP + H(+). This chain is Cysteine-rich receptor-like protein kinase 34, found in Arabidopsis thaliana (Mouse-ear cress).